The following is a 466-amino-acid chain: Tubulointerstitial nephritis antigen-like (466 aa).

An N-terminal signal peptide occupies residues 1-21; the sequence is MWGCWLGLLLLLLAGQAALEA. Positions 49–96 constitute an SMB domain; that stretch reads EQDMCCRGRADECALPYLGATCYCDLFCNRTVSDCCPDFWDFCLGIPP. Disulfide bonds link Cys53/Cys72, Cys70/Cys72, Cys70/Cys84, Cys76/Cys83, and Cys84/Cys91. Residue Asn77 is glycosylated (N-linked (GlcNAc...) asparagine). Asn160 is a glycosylation site (N-linked (GlcNAc...) asparagine).

This sequence belongs to the peptidase C1 family. Post-translationally, glycosylated. As to expression, highly expressed in kidney, heart and adrenocortical cells of adrenal glands. Moderately expressed in spleen and liver. Also found in prostate, seminal vesicle, epididymis and testis in male reproductive organs. In adrenal glands is found in the outer cortical regions corresponding to the zona glomerulosa (zG) and the undifferentiated cell zone (zU) (at protein level).

The protein localises to the secreted. Functionally, may be implicated in the adrenocortical zonation and in mechanisms for repressing the CYP11B1 gene expression in adrenocortical cells. This is a non catalytic peptidase C1 family protein. The protein is Tubulointerstitial nephritis antigen-like (Tinagl1) of Mus musculus (Mouse).